The chain runs to 413 residues: Glucose-1-phosphate adenylyltransferase (413 aa).

Residues G161, 176–177 (EK), and S195 each bind alpha-D-glucose 1-phosphate.

This sequence belongs to the bacterial/plant glucose-1-phosphate adenylyltransferase family. In terms of assembly, homotetramer.

The enzyme catalyses alpha-D-glucose 1-phosphate + ATP + H(+) = ADP-alpha-D-glucose + diphosphate. It participates in glycan biosynthesis; glycogen biosynthesis. In terms of biological role, involved in the biosynthesis of ADP-glucose, a building block required for the elongation reactions to produce glycogen. Catalyzes the reaction between ATP and alpha-D-glucose 1-phosphate (G1P) to produce pyrophosphate and ADP-Glc. The sequence is that of Glucose-1-phosphate adenylyltransferase from Anaeromyxobacter dehalogenans (strain 2CP-C).